We begin with the raw amino-acid sequence, 210 residues long: Probable nicotinate-nucleotide adenylyltransferase (210 aa).

This sequence belongs to the NadD family.

The enzyme catalyses nicotinate beta-D-ribonucleotide + ATP + H(+) = deamido-NAD(+) + diphosphate. The protein operates within cofactor biosynthesis; NAD(+) biosynthesis; deamido-NAD(+) from nicotinate D-ribonucleotide: step 1/1. Functionally, catalyzes the reversible adenylation of nicotinate mononucleotide (NaMN) to nicotinic acid adenine dinucleotide (NaAD). The sequence is that of Probable nicotinate-nucleotide adenylyltransferase from Methylococcus capsulatus (strain ATCC 33009 / NCIMB 11132 / Bath).